The primary structure comprises 684 residues: Phenoloxidase 2 (684 aa).

A propeptide spanning residues Met-1–Arg-50 is cleaved from the precursor. His-208, His-212, and His-238 together coordinate Cu cation. Catalysis depends on Glu-350, which acts as the Proton acceptor. Residues His-365, His-369, and His-405 each coordinate Cu cation. 2 N-linked (GlcNAc...) asparagine glycosylation sites follow: Asn-448 and Asn-492. Intrachain disulfides connect Cys-581-Cys-623 and Cys-583-Cys-630. Residues Asn-665 and Asn-677 are each glycosylated (N-linked (GlcNAc...) asparagine).

This sequence belongs to the tyrosinase family. Cu(2+) is required as a cofactor. Post-translationally, upon activation, a trypsin type protease cleaves prophenol oxidase to yield the active enzyme.

Its subcellular location is the secreted. The catalysed reaction is 2 L-dopa + O2 = 2 L-dopaquinone + 2 H2O. The enzyme catalyses L-tyrosine + O2 = L-dopaquinone + H2O. This is a copper-containing oxidase that functions in the formation of pigments such as melanins and other polyphenolic compounds. Catalyzes the rate-limiting conversions of tyrosine to DOPA, DOPA to DOPA-quinone and possibly 5,6 dihydroxyindole to indole-5'6 quinonee. This Drosophila melanogaster (Fruit fly) protein is Phenoloxidase 2 (PPO2).